Here is a 168-residue protein sequence, read N- to C-terminus: Plasma membrane-associated cation-binding protein 2 (168 aa).

G2 carries N-myristoyl glycine lipidation. 7 consecutive repeat copies span residues V26–K30, V69–K73, V94–K99, V103–K107, V110–K115, V118–K122, and V124–K129. A 7 X 5 AA approximate repeats of V-E-E-K-K region spans residues V26–K129. A coiled-coil region spans residues E56–K77. Residues E88–V131 are compositionally biased toward basic and acidic residues. A disordered region spans residues E88–A168. Over residues E152–A168 the composition is skewed to low complexity.

The protein belongs to the DREPP family. Binds microtubules. Interacts with calcium ion Ca(2+), calmodulin and some phosphatidylinositol phosphates (PtdInsPs) such as phosphatidylinositol 3,5-bisphosphate [PtdIns(3,5)P(2)], PtdIns(4,5)P(2) and PtdIns(3,4,5)P(3). It depends on Cu(2+) as a cofactor. In terms of tissue distribution, mostly expressed in the expanding cells, specifically in roots (except in root tips) and flowers (at protein level). Also detected in cotyledons, hypocotyls and trichome stalks.

It localises to the cell membrane. The protein resides in the cytoplasm. It is found in the cytoskeleton. In terms of biological role, may be involved in intracellular signaling through interaction with PtdInsPs and calmodulin (CaM); may keep PtdInsPs attached to the plasma membrane until Ca(2+)-CaM reaches a competitive concentration subsequent to an increase triggered by a stimulus, thus leading to PtdInsPs release and subsequent activation of InsPs-dependent signaling cascade. Binds to microtubules and inhibits tubulin polymerization. Regulates directional cell growth and cortical microtubule organization by destabilizing microtubules (e.g. in cotyledon pavement cells). This Arabidopsis thaliana (Mouse-ear cress) protein is Plasma membrane-associated cation-binding protein 2.